The chain runs to 229 residues: Platelet-activating factor acetylhydrolase IB subunit alpha2 (229 aa).

Ser-2 is modified (N-acetylserine). Ser-2 is subject to Phosphoserine. Ser-48 is an active-site residue. Ser-64 is modified (phosphoserine). Residues Asp-193 and His-196 contribute to the active site. Thr-220 carries the phosphothreonine modification.

The protein belongs to the 'GDSL' lipolytic enzyme family. Platelet-activating factor acetylhydrolase IB beta/gamma subunits subfamily. Forms a catalytic dimer which is either homodimer (alpha2/alpha2 homodimer) or heterodimer with PAFAH1B3 (alpha2/alpha1 heterodimer). Component of the cytosolic (PAF-AH (I)) heterotetrameric enzyme, which is composed of PAFAH1B1 (beta), PAFAH1B2 (alpha2) and PAFAH1B3 (alpha1) subunits. The catalytic activity of the enzyme resides in the alpha1 (PAFAH1B3) and alpha2 (PAFAH1B2) subunits, whereas the beta subunit (PAFAH1B1) has regulatory activity. Trimer formation is not essential for the catalytic activity. Interacts (homodimer form) with PAFAH1B1 (homodimer form); PAFAH1B2 competes with NDEL1 for PAFAH1B1 binding. Interacts with VLDLR; this interaction may modulate the Reelin pathway.

The protein localises to the cytoplasm. The catalysed reaction is a 1-O-alkyl-2-acetyl-sn-glycero-3-phosphocholine + H2O = a 1-O-alkyl-sn-glycero-3-phosphocholine + acetate + H(+). The enzyme catalyses 1-O-hexadecyl-2-acetyl-sn-glycero-3-phosphocholine + H2O = 1-O-hexadecyl-sn-glycero-3-phosphocholine + acetate + H(+). It catalyses the reaction 1-O-hexadecyl-2-acetyl-sn-glycero-3-phosphate + H2O = 1-O-hexadecyl-sn-glycero-3-phosphate + acetate + H(+). It carries out the reaction 1-O-hexadecyl-2-acetyl-sn-glycero-3-phosphoethanolamine + H2O = 1-O-hexadecyl-sn-glycero-3-phosphoethanolamine + acetate + H(+). Its activity is regulated as follows. Beta subunit (PAFAH1B1) stimulates the acetylhydrolase activity of the alpha2/alpha2 catalytic homodimer. In terms of biological role, alpha2 catalytic subunit of the cytosolic type I platelet-activating factor (PAF) acetylhydrolase (PAF-AH (I)) heterotetrameric enzyme that catalyzes the hydrolyze of the acetyl group at the sn-2 position of PAF and its analogs and modulates the action of PAF. The activity and substrate specificity of PAF-AH (I) are affected by its subunit composition. The alpha2/alpha2 homodimer (PAFAH1B2/PAFAH1B2 homodimer) hydrolyzes PAF and 1-O-alkyl-2-acetyl-sn-glycero-3-phosphorylethanolamine (AAGPE) more efficiently than 1-O-alkyl-2-acetyl-sn-glycero-3-phosphoric acid (AAGPA). In contrast, the alpha1/alpha2 heterodimer(PAFAH1B3/PAFAH1B3 heterodimer) hydrolyzes AAGPA more efficiently than PAF, but has little hydrolytic activity towards AAGPE. May play a role in male germ cell meiosis during the late pachytenestage and meiotic divisions as well as early spermiogenesis. The sequence is that of Platelet-activating factor acetylhydrolase IB subunit alpha2 from Pongo abelii (Sumatran orangutan).